Here is a 515-residue protein sequence, read N- to C-terminus: Ribonuclease Y (515 aa).

Residues 6-26 (LTSFVIITLSLAVGLTGGYYG) traverse the membrane as a helical segment. The region spanning 205 to 290 (TVSVVPLPND…EMVEKARKEI (86 aa)) is the KH domain. Residues 331 to 424 (VLRHSVEVAH…VQAADAISAS (94 aa)) enclose the HD domain.

The protein belongs to the RNase Y family.

The protein localises to the cell membrane. Its function is as follows. Endoribonuclease that initiates mRNA decay. The protein is Ribonuclease Y of Syntrophomonas wolfei subsp. wolfei (strain DSM 2245B / Goettingen).